The primary structure comprises 76 residues: Small nuclear ribonucleoprotein G (76 aa).

Positions 4–76 constitute a Sm domain; the sequence is AHPPELKKFM…IIMLEALERV (73 aa).

The protein belongs to the snRNP Sm proteins family. In terms of assembly, core component of the spliceosomal U1, U2, U4 and U5 small nuclear ribonucleoproteins (snRNPs), the building blocks of the spliceosome. Most spliceosomal snRNPs contain a common set of Sm proteins, SNRPB, SNRPD1, SNRPD2, SNRPD3, SNRPE, SNRPF and SNRPG that assemble in a heptameric protein ring on the Sm site of the small nuclear RNA to form the core snRNP. Component of the U1 snRNP. The U1 snRNP is composed of the U1 snRNA and the 7 core Sm proteins SNRPB, SNRPD1, SNRPD2, SNRPD3, SNRPE, SNRPF and SNRPG, and at least three U1 snRNP-specific proteins SNRNP70/U1-70K, SNRPA/U1-A and SNRPC/U1-C. Component of the U4/U6-U5 tri-snRNP complex composed of the U4, U6 and U5 snRNAs and at least PRPF3, PRPF4, PRPF6, PRPF8, PRPF31, SNRNP200, TXNL4A, SNRNP40, SNRPB, SNRPD1, SNRPD2, SNRPD3, SNRPE, SNRPF, SNRPG, DDX23, CD2BP2, PPIH, SNU13, EFTUD2, SART1 and USP39, plus LSM2, LSM3, LSM4, LSM5, LSM6, LSM7 and LSM8. Component of the U7 snRNP complex, or U7 Sm protein core complex, that is composed of the U7 snRNA and at least LSM10, LSM11, SNRPB, SNRPD3, SNRPE, SNRPF and SNRPG; the complex does not contain SNRPD1 and SNRPD2. Component of the minor spliceosome, which splices U12-type introns. Part of the SMN-Sm complex that contains SMN1, GEMIN2/SIP1, DDX20/GEMIN3, GEMIN4, GEMIN5, GEMIN6, GEMIN7, GEMIN8, STRAP/UNRIP and the Sm proteins SNRPB, SNRPD1, SNRPD2, SNRPD3, SNRPE, SNRPF and SNRPG; catalyzes core snRNPs assembly. Forms a 6S pICln-Sm complex composed of CLNS1A/pICln, SNRPD1, SNRPD2, SNRPE, SNRPF and SNRPG; ring-like structure where CLNS1A/pICln mimics additional Sm proteins and which is unable to assemble into the core snRNP. Interacts with GEMIN2 (via N-terminus); the interaction is direct. Interacts with SNRPE; the interaction is direct.

It localises to the cytoplasm. The protein resides in the cytosol. The protein localises to the nucleus. Its function is as follows. Plays a role in pre-mRNA splicing as a core component of the spliceosomal U1, U2, U4 and U5 small nuclear ribonucleoproteins (snRNPs), the building blocks of the spliceosome. Component of both the pre-catalytic spliceosome B complex and activated spliceosome C complexes. As a component of the minor spliceosome, involved in the splicing of U12-type introns in pre-mRNAs. As part of the U7 snRNP it is involved in histone 3'-end processing. The chain is Small nuclear ribonucleoprotein G (SNRPG) from Bos taurus (Bovine).